Reading from the N-terminus, the 100-residue chain is NAD(P)H-quinone oxidoreductase subunit 4L, chloroplastic (100 aa).

The next 3 helical transmembrane spans lie at methionine 1–isoleucine 21, isoleucine 31–phenylalanine 51, and isoleucine 60–leucine 80.

The protein belongs to the complex I subunit 4L family. NDH is composed of at least 16 different subunits, 5 of which are encoded in the nucleus.

Its subcellular location is the plastid. The protein localises to the chloroplast thylakoid membrane. The enzyme catalyses a plastoquinone + NADH + (n+1) H(+)(in) = a plastoquinol + NAD(+) + n H(+)(out). It carries out the reaction a plastoquinone + NADPH + (n+1) H(+)(in) = a plastoquinol + NADP(+) + n H(+)(out). NDH shuttles electrons from NAD(P)H:plastoquinone, via FMN and iron-sulfur (Fe-S) centers, to quinones in the photosynthetic chain and possibly in a chloroplast respiratory chain. The immediate electron acceptor for the enzyme in this species is believed to be plastoquinone. Couples the redox reaction to proton translocation, and thus conserves the redox energy in a proton gradient. This chain is NAD(P)H-quinone oxidoreductase subunit 4L, chloroplastic, found in Trachelium caeruleum (Blue throatwort).